The following is a 143-amino-acid chain: Subtelomeric hrmA-associated cluster protein cgnA (143 aa).

29 G-Q-I/R/S repeats span residues G11 to I13, G14 to I16, G17 to R19, G20 to S22, G23 to R25, G26 to S28, G29 to R31, G32 to S34, G35 to I37, G38 to S40, G41 to S43, G44 to S46, G47 to I49, G50 to I52, G53 to I55, G56 to I58, G59 to I61, G62 to I64, G65 to I67, G68 to I70, G71 to I73, G74 to I76, G77 to I79, G80 to I82, G83 to I85, G86 to I88, G89 to I91, G92 to I94, and G95 to A97. Residues G11–G68 form the Collagen-like domain. The interval G11–A97 is 29 X 3 AA approximate tandem repeats of G-Q-I/R/S. Positions I16–I49 are disordered.

The protein resides in the secreted. In terms of biological role, collagen-like protein; part of the subtelomeric hrmA-associated cluster (HAC) containing genes that alter the hyphal surface (such as reduced total chitin or increased beta-glucan exposure) and perturb inter-hyphal interactions within the developing biofilms, resulting in a loss of vertically aligned polarized growing filaments. Consequently, this hypoxia-typic morphotype (called H-MORPH) with altered biofilm architecture leads to increased hypoxia fitness, increased host inflammation, rapid disease progression, and mortality in a murine model of invasive aspergillosis. CgnA is directly involved in the reduction of total surface chitin and the increase of beta-glucan exposure, and mediates the detachment of the extracellular matrix and especially of its component galactosaminogalactan (GAG). The sequence is that of Subtelomeric hrmA-associated cluster protein cgnA from Aspergillus fumigatus (strain ATCC MYA-4609 / CBS 101355 / FGSC A1100 / Af293) (Neosartorya fumigata).